The following is a 111-amino-acid chain: UPF0125 protein SO_1475 (111 aa).

Residues 88 to 111 form a disordered region; it reads VRRRRADKAKDEGRANKVTGGRVS.

Belongs to the UPF0125 (RnfH) family.

The polypeptide is UPF0125 protein SO_1475 (Shewanella oneidensis (strain ATCC 700550 / JCM 31522 / CIP 106686 / LMG 19005 / NCIMB 14063 / MR-1)).